Here is a 167-residue protein sequence, read N- to C-terminus: Translationally-controlled tumor protein homolog (167 aa).

A TCTP domain is found at 1–167 (MLIYQDVLTG…WKDGLKEIKI (167 aa)).

This sequence belongs to the TCTP family.

Its subcellular location is the cytoplasm. It localises to the cytoskeleton. Involved in protein synthesis. Involved in microtubule stabilization. This is Translationally-controlled tumor protein homolog from Cryptococcus neoformans var. neoformans serotype D (strain B-3501A) (Filobasidiella neoformans).